The following is a 110-amino-acid chain: Nucleoid-associated protein NFA_2940 (110 aa).

It belongs to the YbaB/EbfC family. In terms of assembly, homodimer.

It localises to the cytoplasm. It is found in the nucleoid. In terms of biological role, binds to DNA and alters its conformation. May be involved in regulation of gene expression, nucleoid organization and DNA protection. The protein is Nucleoid-associated protein NFA_2940 of Nocardia farcinica (strain IFM 10152).